Here is a 538-residue protein sequence, read N- to C-terminus: Cytochrome P450 52A4 (538 aa).

A helical transmembrane segment spans residues 27-46; that stretch reads WYILIPTILLTLNFLSILHT. Residue Cys485 coordinates heme.

This sequence belongs to the cytochrome P450 family. It depends on heme as a cofactor.

Its subcellular location is the membrane. Together with an NADPH cytochrome P450 the enzyme system catalyzes the terminal hydroxylation as the first step in the assimilation of alkanes and fatty acids. The sequence is that of Cytochrome P450 52A4 (CYP52A4) from Candida maltosa (Yeast).